The primary structure comprises 293 residues: MIAILMGGNSAERAISLKSGEAIYQTLNNQNIDCFTFDWYGDNLSEFWQQEFDQVFIILHGRGGEDGYIQKQLENRGICYTGSDSNASHNSMDKARTKIIWEQHSLTLAPSIIANIDQPINPINFPLPWAVKPTLEGSSIGISKVDNQMQLNDALMLAWQYAPYALIEQWIKGDEYTVAILGDKALPVVRIITDQNFYDYESKYHSNKTQYLCPCNLSLTQEKALQAIALKAFFAINAKGWGRVDFIINQHNKPYLLEINTVPGMTSHSLVPMAAKAIGISFNKLVTSIINEI.

The ATP-grasp domain occupies 98-291 (KIIWEQHSLT…FNKLVTSIIN (194 aa)). An ATP-binding site is contributed by 124–177 (NFPLPWAVKPTLEGSSIGISKVDNQMQLNDALMLAWQYAPYALIEQWIKGDEYT). Residues D245, E258, and N260 each coordinate Mg(2+).

This sequence belongs to the D-alanine--D-alanine ligase family. Requires Mg(2+) as cofactor. It depends on Mn(2+) as a cofactor.

It localises to the cytoplasm. It catalyses the reaction 2 D-alanine + ATP = D-alanyl-D-alanine + ADP + phosphate + H(+). It functions in the pathway cell wall biogenesis; peptidoglycan biosynthesis. Functionally, cell wall formation. The protein is D-alanine--D-alanine ligase of Vesicomyosocius okutanii subsp. Calyptogena okutanii (strain HA).